A 391-amino-acid polypeptide reads, in one-letter code: 8-amino-7-oxononanoate synthase (391 aa).

Arg20 provides a ligand contact to substrate. 106 to 107 (GY) contributes to the pyridoxal 5'-phosphate binding site. His131 lines the substrate pocket. The pyridoxal 5'-phosphate site is built by Ser178, His206, and Thr234. Lys237 carries the post-translational modification N6-(pyridoxal phosphate)lysine. A substrate-binding site is contributed by Thr353.

It belongs to the class-II pyridoxal-phosphate-dependent aminotransferase family. BioF subfamily. In terms of assembly, homodimer. Requires pyridoxal 5'-phosphate as cofactor.

It carries out the reaction 6-carboxyhexanoyl-[ACP] + L-alanine + H(+) = (8S)-8-amino-7-oxononanoate + holo-[ACP] + CO2. Its pathway is cofactor biosynthesis; biotin biosynthesis. Functionally, catalyzes the decarboxylative condensation of pimeloyl-[acyl-carrier protein] and L-alanine to produce 8-amino-7-oxononanoate (AON), [acyl-carrier protein], and carbon dioxide. This chain is 8-amino-7-oxononanoate synthase, found in Trichlorobacter lovleyi (strain ATCC BAA-1151 / DSM 17278 / SZ) (Geobacter lovleyi).